Here is a 179-residue protein sequence, read N- to C-terminus: uncharacterized protein (179 aa).

Composition is skewed to polar residues over residues proline 1–glycine 37 and isoleucine 60–serine 70. Disordered stretches follow at residues proline 1–lysine 41 and isoleucine 60–arginine 82.

As to expression, component of the acid-soluble and acid-insoluble organic matrix of calcified shell layers (at protein level).

The protein localises to the secreted. This is an uncharacterized protein from Haliotis asinina (Donkey's ear abalone).